The following is a 166-amino-acid chain: MNGAKQAPEISVNRAGRQARIVAILSTESVSSQSELAALLAVQGIEATQATLSRDLEELGAVKLRGADGGVGVYVVPEDGSPVRGVTGGTGRLARLLGELLVSSDASANLAVLRTPPGGAHYLASAIDRAALPYVVGTIAGDDTVFVAAREPMTGAELAIALEKLK.

The protein belongs to the ArgR family.

Its subcellular location is the cytoplasm. The protein operates within amino-acid biosynthesis; L-arginine biosynthesis [regulation]. In terms of biological role, regulates arginine biosynthesis genes. This chain is Arginine repressor, found in Mycobacterium ulcerans (strain Agy99).